We begin with the raw amino-acid sequence, 7126 residues long: MLSKAGVTTQGARGKYRAELYNEKRSDHVACTVPLCDTEDMASKLTPWFEDGETAFNQVSSILKEKGKILFVPMHMQRAMKFLPGPRVYLVERLTGGMLSKHFLVNQLAYKDHVGAAMMRTTLNVKPLGMFFPYDSSLETGEHTFLLRKNGLGGQLFRERPWDRKETPYVEILDDLEADPTGKYSQNLLKKLIGGDCIPVDQYMCGKNGKPIADYAKIVAKEGLTTLADIEVDVKSRMDSDRFIVLNKKLYRVVWNVTRRNVPYSKQTAFTVVSVIQCDDKESVPEHTFTIGSQILMVSPLKATNNKNFNLKQRLLHTFYGKEAVQQPGYIYHSAYVDCNACGRGTWCTGNAIQGFACDCGANYSANDVDLQSSGLVPKNALFLANCPCANNGACSHNAAQVYSILDGKACVEVGGKSFTLTFGGVVYAYMGCCDGTMYFVPRAKSCVSRIGDAIFTGCTGTWDKVVETANLFLEKAQHSLNFCQQFALTEVVLAILSGTTSTFEELRDLCHNASYEKVRDHLVNHGFVVTIGDYIRDAINIGANGVCNATINAPFIAFTGLGESFKKVAAIPWKICSNLKSALDYYCSNIMFRVFPYDIPCDVNDFVELLLDCGKLTVATSYFVLRYLDEKFDTVLGTVSNACQTALSSFLNACVAASRATAGFISDMFKLFKVLMHKLYVYTSCGYVAVAEHSSKIVQQVLDIMSKAMKLLHTNVSWAGTKLSAIIYEGREALLFNSGTYFCLSTKAKTLQDQMNLVLPGDYNKKTLGILDPVPNADTIDVTANSTVVDVVHGQLEPTNEHGPSMIVGNYVLVSDKLFVRTDDEEFYPLCINGKVVSTLFRLKGGMPSKKVTFGDVNTVEVTAYRSVSITYDIHPVLDALLSSSKLATFTVEKDLLVEDFVDVIKDEVLTLLTPLLRGYDIDGFDVEDFIDVPCYVYNQDGDCAWSSNMTFSINPVEDVEEVEEFIEDDYLSDELPIADDEEAWTRAVEEVMPLDDILVAEIELEEDLPLETALESVEAEVGESISDELCVVETAKAQEPSVESTDSTPSTSTVVSENDLSVKPMSRVAETGDVLEVETAVVGGPVSDVTASVVTNDIVSVEQAQQCGVSSLPIQDEASENQVHQVPDLQCTSETKVEIVQPRQDLRPRRLRKSKVDLSKYKHTVINNSVTLVLGDAIQIASLLPKCVLVNAANRHLKHGGGIAGAINKASGGDVQEESDEYISNSGPLHVGDSVLLKGYGLADAILRVVGPDARNNEDAALLKRCYKTFNKHTIVVTPLISSGIFSVDPKVSFEYLLANVTTTTYVVVNNEDIYNTLATPSKPDGLVYSFEGWRGTVRTAKNYGFTCFICTEYSANVKFLRTKGVDTTKKIQTVDGVSYYLYSARDALTDVIAAANGCPGICAMPFGYVTHGLDLAQSGNYVRQVKVPYVCLLASKEQIPIMNSDVAIQTPETAFINNVTSNGGYHSWHLVSGDLIVKDVCYKKLLHWSGQTICYADNKFYVVKNDVALPFSDLEACRAYLTSRAAQQVNIEVLVTIDGVNFRTVILNDATTFRKQLGATFYKGVDISDALPTVKMGGESLFVADNLSESEEVVLKEYYGTSDVTFLQRYYSLQPLVQQWKFVVHDGVKSLKLSNYNCYINATIMMIDMLHDIKFVVPALQNAYLRYKGGDPYDFLALIMAYGDCTFDNPDDEAKLLHTLLAKAELTVSAKMVWREWCTVCGIRDIEYTGMRACVYAGVNSMEELQSVFNETCVCGSVKHRQLVEHSTPWLLVSGLNEVKVSTSTDPVYRAFNVFQGVETSVGHYVHVRVKDGLFYKYDSGSLTKTSDMKCKMTSVWYPKVRYTADCNVVVYDLDGVTKVEVNPDLSNYYMKDGKYYTSKPTIKYSPATILPGSVYSNSCLVGVDGTPGSDTISKFFNDLLGFDETKPISKKLTYSLLPNEDGDVLLSEFNNYNPVYKKGVMLKGKPILWVNNGVCDSALNKPNRASLRQLYDVAPIVLDNKYTVLQDNTSQLIEPNVPVVEDVSITTRKLIEVKCKGLNKPFVKGNFSFVNDPNGVTVVDTLGLTELRALYVDINTRYIVLRDNNWSSLFKLHTVESGDLQIVANGGSVTRRARVLLGASSLFASFAKITVTATTAACKTAGRSFCKFVVNYGVLQNMFLFLKMLFFLPFNYLWPKKQPTVDVGVSGLRTAGVVTTNIVKQCGTAAYYMLLGKFKRVDWKATLRLFLLLCTTILLLSSIYHLVIFNQVLSSDVMLEDATGILAMYKEVRSYLGIRTLCDGLAVEYRNTSFDVVDFCSNRSVLCQWCLIGQDSLTRYSALQMLQTHITSYVLNIDWIWFALEFFLAYVLYTSSFNVLLLVVTAQYFFAYTSAFVNWRAYNYIVSGLFFLVTHIPLHGLVRVYNFLACLWFLRKFYSHVINGCKDTACLLCYKRNRLTRVEASTIVCGTKRTFYIAANGGTSYCCKHNWNCVECDTAGVGNTFICTEVANDLTTTLRRLIKPTDQSHYYVDSVVVKDAVVELHYNRDGSSCYERYPLCYFTNLEKLKFKEVCKTPTGIPEHNFLIYDTNDRGQENLARSACVYYSQVLCKPMLLVDVNLVTTVGDSREIAIKMLDSFINSFISLFSVSRDKLEKLINTARDCVRRGDDFQTVLKTFTDAARGHAGVESDVETTMVVDALQYAHKNDIQLTTECYNNYVPGYIKPDSINTLDLGCLIDLKAASVNQTSMRNANGACVWNSGDYMKLSDSFKRQIRIACRKCNIPFRLTTSKLRAADNILSVKFSATKIVGGAPSWLLRVRDLTVKGYCILTLFVFTVAVLSWFCLPSYSIATVNFNDDRILTYKVIENGIVRDIAPNDACFANKYGHFSKWFNENHGGVYRNSVDCPITIAVIAGVAGARVANVPATLAWVGRQIVLFVSRVFANTNVCFTPTNEIPYDTFSDSGCVLSSECTLFRDAEGNLNPFCYDPTVLPGASSYADMKPHVRYDMYDSDMYIKFPEVIFESTLRITKTLATQYCRFGSCEESAAGVCISTNGSWALYNQNYSTRPGIYCGDDYFDIVRRLAVSLFQPVTYFQLSTSLAMGLVLCVFLTAAFYYINKVKRALADYTQCAVVAVVAALLNSLCLCFIVANPLLVAPYTAMYYYATFYLTGEPAFIMHISWYVMFGTVVPIWMLASYTVGVMLRHLFWVLAYFSKKHVDVFTDGKLNCSFQDAASNIFVIGKDTYVALRNAITQDSFVRYLSLFNKYKYYSGAMDTASYREACAAHLCKALQTYSETGSDILYQPPNCSVTSSVLQSGLVKMSAPSGAVENCIVQVTCGSMTLNGLWLDNTVWCPRHIMCPADQLTDPNYDALLISKTNHSFIVQKHIGAQANLRVVAHSMVGVLLKLTVDVANPSTPAYTFSTVKPGASFSVLACYNGKPTGVFTVNLRHNSTIKGSFLCGSCGSVGYTENGGVLNFVYMHQMELSNGTHTGSSFDGVMYGAFEDKQTHQLQLTDKYCTINVVAWLYAAVLNGCKWFVKPTRVGIVTYNEWALSNQFTEFVGTQSIDMLAHRTGVSVEQMLAAIQSLHAGFQGKTILGQSTLEDEFTPDDVNMQVMGVVMQSGVKRISYGFMHWLMSTLVLAYVSVMQLTKFTMWTYLFETIPTQMTPLLFGFMACVMFTVKHKHTFLSLFLLPVALCLTYANIVYEPQTLVSSTLIAVANWLTPTSVYMRTTHLDFGLYISLSFVLAIIVRRLYRPSMSNLALALCSGVMWFYTYVIGDHSSPITYLMFITTLTSDYTITVFATVNLAKFISGLVFLYAPHLGFILPEVKLVLLIYLCLGYMCTMYFGVFSLLNLKLRVPLGVYDYSVSTQEFRFLTGNGLHAPRNSWEALILNFKLLGIGGTPCIKVATVQSKLTDLKCTSVVLLTVLQQLHLESNSKAWSYCVKLHNEILAAVDPTEAFERFVCLFATLMSFSANVDLDALANDLFENSSVLQATLTEFSHLATYAELETAQSSYQKALNSGDASPQVLKALQKAVNVAKNAYEKDKAVARKLERMAEQAMTSMYKQARAEDKKAKIVSAMQTMLFGMIKKLDNDVLNGVIANARNGCVPLSIVPLCASNKLRVVIPDISVWNKVVNWPSVSYAGSLWDVTVINNVDNEVVKPTDVVETNESLTWPLVIECSRASSSAVKLQNNEIHPKGLKTMVVTAGIDQVNCSSSAVAYYEPVQGHRMVMGLLSENAHLKWAKVEGKDGFINIELQPPCKFLIAGPKGPEIRYLYFVKNLNNLHRGQLLGHIAATVRLQAGANTEFASNSTVLTLVAFAVDPAKAYLDYVGSGGTPLSNYVKMLAPKTGTGVAISVKPEATADQETYGGASVCLYCRAHIEHPDVSGVCKYKTRFVQIPAHVRDPVGFLLKNVPCNVCQYWVGYGCNCDALRNNTVPQSKDTNFLNRVRGSSVNARLEPCSSGLTTDVVYRAFDICNFKARVAGIGKYYKTNTCRFVQVDDEGHKLDSYFIVKRHTMSNYELEKRCYDLLKDCDAVAIHDFFIFDVDKTKTPHIVRQSLTEYTMMDLVYALRHFDQNNCEVLKSILVKYGCCEQSYFDNKLWFDFVENPSVIGVYHKLGERIRQAMLNTVKMCDHMVKSGLVGVLTLDNQDLNGKWYDFGDFVITQPGAGVAIVDSYYSYLMPVLSMTNCLAAETHKDCDFNKPLIEWLLLEYDYTDYKIGLFNKYFKHWDQTYHPNCVNCGDDRCILHCANFNVLFSMVLPNTSFGPIVRKIFVDGVPFIVSCGYHYKELGLVMNMDVNIHRHRLALKELMMYAADPAMHIASASALWDLRTPCFSVAALTTGLTFQTVRPGNFNKDFYDFVVSRGFFKEGSSVTLKHFFFAQDGHAAITDYSYYAYNLPTMVDIKQMLFCMEVVDKYFDIYDGGCLNASEVIVNNLDKSAGHPFNKFGKARVYYESMSYQEQDELFAVTKRNVLPTITQMNLKYAISAKNRARTVAGVSILSTMTNRQYHQKMLKSMAATRGATCVIGTTKFYGGWDFMLKTLYKDVESPHLMGWDYPKCDRAMPNMCRILASLILARKHSTCCTNSDRFYRLANECAQVLSEYVLCGGGYYVKPGGTSSGDATTAYANSVFNILQATTANVSALMSANGNTIIDREIKDMQFDLYINVYRKVVPDPKFVDKYYAFLNKHFSMMILSDDGVVCYNSDYAAKGYVASIQNFKETLYYQNNVFMSEAKCWVETNLEKGPHEFCSQHTLYIKDGDDGYFLPYPDPSRILSAGCFVDDIVKTDGTVMMERYVSLAIDAYPLTKHDDTEYQNVFWVYLQYIEKLYKDLTGHMLDSYSVMLCGDDSAKFWEEGFYRDLYSSPTTLQAVGSCVVCHSQTSLRCGTCIRRPFLCCKCCYDHVIATTHKMVLSVSPYVCNAPGCDVSDVTKLYLGGMSYYCNDHRPVCSFPLCANGLVFGLYKNMCTGSSSIMEFNRLATCDWSDSGDYTLANTTTEPLKLFAAETLRATEEASKQSYAIATIKEIVGERELILVWEVGKSKPPLNRNYVFTGYHLTKNSKVQLGEYVFERIDYSDAVSYKSSTTYKLAVGDIFVLTSHSVATLSAPTIVNQERYLKITGIYPTITVPEEFANHVVNFQKAGFSKYVTVQGPPGTGKSHFAIGLAIYYPTARIVYTACSHAAVDALCAKAFKYLNIAKCSRIIPAKARVECYDRFKVNDTNAQYLFSTVNALPEISVDILVVDEVSMCTNYDLSIINSRVKAKHIVYVGDPAQLPAPRTLLTRGTLEPENFNSVTRLMCNLGPDIFLSVCYRCPKEIVNTVSALVYNNKLSAKKDASGQCFKILFKGSVTHDASSAINRPQLNFVKTFIAANPNWSKAVFISPYNSQNAVARSMLGLTTQTVDSSQGSEYPYVIFCQTADTAHANNLNRFNVAVTRAQKGILCVMTSQVLFDSLEFAELSLNNYKLQSQIVTGLFKDCSREDVGLPPAYAPTYLSVDAKYKTTDELCVNLNITPNVTYSRVISRMGFKLDATIPGYPKLFITRDEAIRQVRSWIGFDVEGAHASRNACGTNVPLQLGFSTGVNFVVQPVGVVDTEWGSMLTTISARPPPGEQFKHLVPLMNKGATWPIVRRRIVQMLSDTLDKLSDYCTFVCWAHGFELTSASYFCKIGKEQRCCMCSRRASTFSSPLQSYACWSHSSGYDYVYNPFFVDVQQWGYVGNLATNHDRYCGIHAGAHVASSDAIMTRCLAIYDCFIERVDWDVTYPYISHEQKLNSCCRTVERNVVRSAVLSGKFDKIYDIGNPKGIPIISEPVEWHFYDAQPLSNKVKKLFYTDDVAKQFEDGLCLFWNCNVSKYPSNAVVCRFDTRVHSEFNLPGCNGGSLYVNKHAFHTPAYDINAFRDLKPLPFFYYSTTPCEVHGSGNMLEDIDYVPLKSAVCITACNLGGAVCRKHAAEYRDYMEAYNIVSAAGFRLWVYKTFDIYNLWSTFVKVQGLENIAFNVIKQGHFTGVDGELPVAVVNDKIFTKNGTDDVCIFKNETALPTNVAFELYAKRAVRSHPDLNLLRNLEVDVCYNFVLWDYDRNNIYGTTTIGVCKYTDIDVNPNLNMCFDIRDKGSLERFMSMPNGVLISDRKIKNYPCIIGPKHAYFNGAILRNIDAKQPITFYLYKKVNNEFVSFSDTFYTCGRTVNDFTALTPMEEDFLVLDSDVFIKKYSLEDYAFEHVVYGDFSHTTLGGLHLLIGLYKKMRDGHILMEEMLKDRATVHNYFITDSNTASYKAVCSVIDLRLDDFVNIIKEMDLDVVSKVVKVPIDLTMIEFMLWCKDGKVQTFYPRLQATNDWKPGLTMPSLFKVQQMNLEPCLLANYKQSIPMPNGVHMNVAKYMQLCQYLNTCTLAVPANMRVIHFGAGCEKGVAPGTSVLRQWLPLDAVLIDNDLNEFVSDADITIFGDCVTVHVGQQVDLLISDMYDPCTKAVGEVNQTKALFFVYLCNFIKNNLALGGSVAIKITEHSWSADLYKIMGRFAYWTVFCTNANASSSEGFLIGINFLGELKEEIDGNVMHANYIFWRNSTPMNLSTYSLFDLSRFPLKLKGTPVLQLKESQINELVISLLSQGKLLIRDNDTLNVSTDVLVNFRKRL.

The 127-residue stretch at Arg25–Gly151 folds into the CoV Nsp1 globular domain. The BetaCoV Nsp1 C-terminal domain occupies Thr167 to Gly195. A CoV Nsp2 N-terminal domain is found at Cys197–Leu472. Zn(2+) is bound by residues Cys339, Cys342, Cys358, and Cys360. Residues Cys339–Cys360 are C4. The region spanning Gln478–Leu712 is the CoV Nsp2 middle domain. Positions His714–Gly847 constitute a CoV Nsp2 C-terminal domain. A Ubiquitin-like 1 domain is found at Lys851–Asp960. Positions Ala1039 to Asp1061 are disordered. Positions Glu1041–Glu1059 are enriched in low complexity. Macro domains are found at residues Asp1159–Gly1328 and Leu1329–Thr1453. The 74-residue stretch at Thr1453–Ser1526 folds into the DPUP domain. Residues Gln1531 to Val1586 form the Ubiquitin-like 2 domain. The Peptidase C16 domain maps to Glu1600 to Asn1871. Cys1641 functions as the For PL-PRO activity in the catalytic mechanism. 4 residues coordinate Zn(2+): Cys1721, Cys1724, Cys1756, and Cys1758. The C4-type zinc finger occupies Cys1721–Cys1758. Active-site for PL-PRO activity residues include His1807 and Asp1822. The region spanning Thr1885–Leu2002 is the Nucleic acid-binding domain. Residues Pro2019 to Ala2140 form the G2M domain. 3 consecutive transmembrane segments (helical) span residues Val2119 to Thr2139, Phe2152 to Leu2172, and Leu2229 to Phe2249. Residues Val2119–Val2402 are HD1. A 3Ecto domain is found at Leu2266–Ser2332. Intrachain disulfides connect Cys2282–Cys2310 and Cys2300–Cys2307. The next 3 membrane-spanning stretches (helical) occupy residues Tyr2333–Tyr2353, Phe2357–Val2377, and Tyr2382–Val2402. The tract at residues Lys2416–Asp2506 is Y1. The CoV Nsp3 Y domain occupies Lys2416–Ile2789. Residues His2420, Cys2425, Cys2430, Cys2433, Cys2466, His2469, Cys2473, and Cys2476 each coordinate Zn(2+). A ZF1 region spans residues His2420 to Cys2433. Residues Cys2466–Cys2476 form a ZF2 region. The interval Gln2507–Val2605 is Y2. Positions Gln2507–Ile2789 are coV-Y. A Y3 region spans residues Gly2606–Asp2688. The segment at Ile2689 to Ile2789 is Y4. Transmembrane regions (helical) follow at residues Gly2807–Pro2827, Ser3079–Ile3099, Cys3112–Ala3132, and Ala3156–Leu3176. The interval Gly2807–Leu3176 is HD2. The Nsp4C domain occupies Val3202–Gln3298. Residues Ser3299–Gln3604 enclose the Peptidase C30 domain. Catalysis depends on for 3CL-PRO activity residues His3339 and Cys3446. The next 7 helical transmembrane spans lie at Ile3610–Met3630, Thr3644–Val3664, Thr3669–Tyr3689, Arg3714–Val3734, Met3742–Gly3762, Leu3791–Pro3811, and Leu3815–Ser3835. The tract at residues Ile3610 to Ser3835 is HD3. The RdRp Nsp7 cofactor domain maps to Ser3897–Gln3979. One can recognise a RdRp Nsp8 cofactor domain in the interval Ala3980–Gln4178. The Nsp9 ssRNA-binding domain maps to Asn4179–Gln4288. In terms of domain architecture, ExoN/MTase coactivator spans Ala4289–Gln4427. 8 residues coordinate Zn(2+): Cys4362, Cys4365, His4371, Cys4378, Cys4404, Cys4407, Cys4415, and Cys4417. Zinc fingers lie at residues Cys4362 to Cys4378 and Cys4404 to Cys4417. The NiRAN domain occupies Phe4433 to Phe4690. Positions 4638 and 4647 each coordinate Mn(2+). One can recognise a Nsp12 Interface domain in the interval Ile4695 to His4793. Positions 4724, 4730, 4735, 4739, and 4916 each coordinate Zn(2+). The Nsp12 RNA-dependent RNA polymerase domain maps to Arg4794 to Gln5361. Residues Ala4796–Ala5010 are rdRp Fingers N-ter. Positions Thr5011–Pro5049 are rdRp Palm N-ter. The RdRp catalytic domain occupies Pro5041–Gly5203. A rdRp Fingers C-ter region spans residues Lys5050–Gly5108. Zn(2+)-binding residues include His5071, Cys5074, and Cys5075. The interval Thr5109–Gln5244 is rdRp Palm C-ter. Active-site residues include Ser5188, Asp5189, and Asp5190. Residues His5245 to Gln5361 are rdRp Thumb. Residues Ala5362 to Asp5474 form the CV ZBD domain. Cys5366, Cys5369, Cys5377, Cys5380, Cys5387, Cys5390, His5394, His5400, Cys5411, Cys5416, Cys5433, and His5436 together coordinate Zn(2+). The 182-residue stretch at Thr5618–Leu5799 folds into the (+)RNA virus helicase ATP-binding domain. Gly5643–Ser5650 serves as a coordination point for ATP. The region spanning Ser5800–Asp5974 is the (+)RNA virus helicase C-terminal domain. In terms of domain architecture, ExoN spans Leu6031–Ile6246. Catalysis depends on residues Asp6049, Glu6051, and Glu6150. 7 residues coordinate Zn(2+): Cys6166, Cys6169, Cys6185, His6188, His6216, Cys6220, and His6223. Active-site residues include His6227 and Asp6232. Cys6238 contacts Zn(2+). The N7-MTase domain maps to Tyr6255–Gln6482. Position 6290-6296 (Asp6290–Gly6296) interacts with S-adenosyl-L-methionine. The segment at Cys6368 to Thr6382 is gpppA-binding. Positions 6406, 6428, 6439, and 6442 each coordinate Zn(2+). One can recognise a Nsp15 N-terminal oligomerization domain in the interval Gly6483 to Arg6543. In terms of domain architecture, AV-Nsp11N/CoV-Nsp15M spans Ala6544–Val6665. The NendoU domain occupies Thr6682 to Pro6821. Catalysis depends on residues His6712, His6727, Lys6767, Lys6870, Asp6954, Lys6994, and Glu7027. The 295-residue stretch at Thr6826 to Val7120 folds into the Nidovirus-type SAM-dependent 2'-O-MTase domain.

The protein belongs to the coronaviruses polyprotein 1ab family. As to quaternary structure, interacts with host PHB and PHB2. In terms of assembly, interacts with papain-like protease nsp3 and non-structural protein 6. Monomer. Homodimer. Only the homodimer shows catalytic activity. As to quaternary structure, interacts with nsp8 and nsp12 to form the replication-transcription complex (RTC): nsp12, nsp7, two subunits of nsp8, and up to two subunits of nsp13. In terms of assembly, interacts with nsp7, nsp13 and nsp12 to form the replication-transcription complex (RTC): nsp12, nsp7, two subunits of nsp8, and up to two subunits of nsp13. Interacts with nsp12. As to quaternary structure, interacts with proofreading exoribonuclease nsp14 and 2'-O-methyltransferase nsp16; these interactions enhance nsp14 and nsp16 enzymatic activities. In terms of assembly, interacts with nsp7 and nsp8 to form the replication-transcription complex (RTC): nsp12, nsp7, two subunits of nsp8, and up to two subunits of nsp13. Interacts with nsp9. Interacts with nsp8 to form the replication-transcription complex (RTC): nsp12, nsp7, two subunits of nsp8, and up to two subunits of nsp13. Mn(2+) is required as a cofactor. Mg(2+) serves as cofactor. In terms of processing, specific enzymatic cleavages in vivo by its own proteases yield mature proteins. 3CL-PRO and PL-PRO proteinases are autocatalytically processed.

It is found in the host membrane. The protein localises to the host cytoplasm. The protein resides in the host perinuclear region. It localises to the host endoplasmic reticulum-Golgi intermediate compartment. The enzyme catalyses ATP + H2O = ADP + phosphate + H(+). It carries out the reaction RNA(n) + a ribonucleoside 5'-triphosphate = RNA(n+1) + diphosphate. It catalyses the reaction Thiol-dependent hydrolysis of ester, thioester, amide, peptide and isopeptide bonds formed by the C-terminal Gly of ubiquitin (a 76-residue protein attached to proteins as an intracellular targeting signal).. The catalysed reaction is a 5'-end (N(7)-methyl 5'-triphosphoguanosine)-ribonucleoside in mRNA + S-adenosyl-L-methionine = a 5'-end (N(7)-methyl 5'-triphosphoguanosine)-(2'-O-methyl-ribonucleoside) in mRNA + S-adenosyl-L-homocysteine + H(+). The enzyme catalyses uridylyl-uridylyl-ribonucleotide-RNA = a 3'-end uridylyl-2',3'-cyclophospho-uridine-RNA + a 5'-end dephospho-ribonucleoside-RNA. It carries out the reaction a 5'-end diphospho-ribonucleoside in mRNA + GTP + H(+) = a 5'-end (5'-triphosphoguanosine)-ribonucleoside in mRNA + diphosphate. It catalyses the reaction a 5'-end (5'-triphosphoguanosine)-ribonucleoside in mRNA + S-adenosyl-L-methionine = a 5'-end (N(7)-methyl 5'-triphosphoguanosine)-ribonucleoside in mRNA + S-adenosyl-L-homocysteine. Functionally, the replicase polyprotein of coronaviruses is a multifunctional protein: it contains the activities necessary for the transcription of negative stranded RNA, leader RNA, subgenomic mRNAs and progeny virion RNA as well as proteinases responsible for the cleavage of the polyprotein into functional products. Its function is as follows. Inhibits host translation by interacting with the 40S ribosomal subunit. The nsp1-40S ribosome complex further induces an endonucleolytic cleavage near the 5'UTR of host mRNAs, targeting them for degradation. Viral mRNAs are not susceptible to nsp1-mediated endonucleolytic RNA cleavage thanks to the presence of a 5'-end leader sequence and are therefore protected from degradation. By suppressing host gene expression, nsp1 facilitates efficient viral gene expression in infected cells and evasion from host immune response. In terms of biological role, may play a role in the modulation of host cell survival signaling pathway by interacting with host PHB and PHB2. Indeed, these two proteins play a role in maintaining the functional integrity of the mitochondria and protecting cells from various stresses. Responsible for the cleavages located at the N-terminus of the replicase polyprotein. In addition, PL-PRO possesses a deubiquitinating/deISGylating activity and processes both 'Lys-48'- and 'Lys-63'-linked polyubiquitin chains from cellular substrates. Participates together with nsp4 in the assembly of virally-induced cytoplasmic double-membrane vesicles necessary for viral replication. Antagonizes innate immune induction of type I interferon by blocking the phosphorylation, dimerization and subsequent nuclear translocation of host IRF3. Also prevents host NF-kappa-B signaling. Functionally, participates in the assembly of virally-induced cytoplasmic double-membrane vesicles necessary for viral replication. Its function is as follows. Cleaves the C-terminus of replicase polyprotein at 11 sites. Recognizes substrates containing the core sequence [ILMVF]-Q-|-[SGACN]. Also able to bind an ADP-ribose-1''-phosphate (ADRP). In terms of biological role, plays a role in the initial induction of autophagosomes from host endoplasmic reticulum. Later, limits the expansion of these phagosomes that are no longer able to deliver viral components to lysosomes. Forms a hexadecamer with nsp8 (8 subunits of each) that may participate in viral replication by acting as a primase. Alternatively, may synthesize substantially longer products than oligonucleotide primers. Functionally, forms a hexadecamer with nsp7 (8 subunits of each) that may participate in viral replication by acting as a primase. Alternatively, may synthesize substantially longer products than oligonucleotide primers. Its function is as follows. Forms a primer, NSP9-pU, which is utilized by the polymerase for the initiation of RNA chains. Interacts with ribosome signal recognition particle RNA (SRP). Together with NSP8, suppress protein integration into the cell membrane, thereby disrupting host immune defenses. In terms of biological role, plays a pivotal role in viral transcription by stimulating both nsp14 3'-5' exoribonuclease and nsp16 2'-O-methyltransferase activities. Therefore plays an essential role in viral mRNAs cap methylation. RNA-directed RNA polymerase that catalyzes the transcription of viral genomic and subgenomic RNAs. Acts in complex with nsp7 and nsp8 to transcribe both the minus and positive strands of genomic RNA. The kinase-like NiRAN domain of NSP12 attaches one or more nucleotides to the amino terminus of NSP9, forming a covalent RNA-protein intermediate that serves as transcription/replication primer. Subgenomic RNAs (sgRNAs) are formed by discontinuous transcription: The polymerase has the ability to pause at transcription-regulating sequences (TRS) and jump to the leader TRS, resulting in a major deletion. This creates a series of subgenomic RNAs that are replicated, transcribed and translated. In addition, Nsp12 is a subunit of the viral RNA capping enzyme that catalyzes the RNA guanylyltransferase reaction for genomic and sub-genomic RNAs. Subsequently, the NiRAN domain transfers RNA to GDP, and forms the core cap structure GpppA-RNA. Functionally, multi-functional protein with a zinc-binding domain in N-terminus displaying RNA and DNA duplex-unwinding activities with 5' to 3' polarity. Activity of helicase is dependent on magnesium. Its function is as follows. Plays a role in viral RNA synthesis through two distinct activities. The N7-guanine methyltransferase activity plays a role in the formation of the cap structure GpppA-RNA. The proofreading exoribonuclease reduces the sensitivity of the virus to RNA mutagens during replication. This activity acts on both ssRNA and dsRNA in a 3'-5' direction. In terms of biological role, plays a role in viral transcription/replication and prevents the simultaneous activation of host cell dsRNA sensors, such as MDA5/IFIH1, OAS, and PKR. Acts by degrading the 5'-polyuridines generated during replication of the poly(A) region of viral genomic and subgenomic RNAs. Catalyzes a two-step reaction in which a 2'3'-cyclic phosphate (2'3'-cP) is first generated by 2'-O transesterification, which is then hydrolyzed to a 3'-phosphate (3'-P). If not degraded, poly(U) RNA would hybridize with poly(A) RNA tails and activate host dsRNA sensors. Methyltransferase that mediates mRNA cap 2'-O-ribose methylation to the 5'-cap structure of viral mRNAs. N7-methyl guanosine cap is a prerequisite for binding of nsp16. Therefore plays an essential role in viral mRNAs cap methylation which is essential to evade immune system. The chain is Replicase polyprotein 1ab (rep) from Bat coronavirus 133/2005 (BtCoV).